A 217-amino-acid chain; its full sequence is Translation initiation factor IF-3 (217 aa).

This sequence belongs to the IF-3 family. In terms of assembly, monomer.

It is found in the cytoplasm. IF-3 binds to the 30S ribosomal subunit and shifts the equilibrium between 70S ribosomes and their 50S and 30S subunits in favor of the free subunits, thus enhancing the availability of 30S subunits on which protein synthesis initiation begins. The chain is Translation initiation factor IF-3 from Synechococcus sp. (strain CC9902).